The sequence spans 316 residues: MSASHPGILHEYTERLVAFELVGKSNVTLTSNVTRSLLLFVGGLGDGLLTVPYVQELVNPLDEIGWSIVQVQTQSSYIGWGTGSLKRDDEDLHKAVDYFLHIGGADFSTRKIVLMGHSTGSQNVLYYLTQSILPNYLIAGIAQAPVSDREAAYQFNGKEKTKELVDWVKAEYLDKGLGNDVLPRSKVENFFGEVPTSANRCIDLTDVRGNDDFFSSDLSADDFAKTFGNLKEISGSTAHSQLILLMSERDEFVSPSTDKAQLLNRFRESIRPTTSNSSLSGIIPGATHNVGPKSSPEALKWLINQLITALRSFIDQ.

The protein belongs to the UPF0613 family.

It is found in the cytoplasm. Its subcellular location is the nucleus. In Schizosaccharomyces pombe (strain 972 / ATCC 24843) (Fission yeast), this protein is UPF0613 protein PB24D3.06c.